The chain runs to 1484 residues: Ral GTPase-activating protein subunit beta (1484 aa).

Disordered stretches follow at residues 355–437 and 697–728; these read PRSD…APRR and GGENNLKSHSRTNSGISSASGGSTEPTTPDSE. The residue at position 359 (serine 359) is a Phosphoserine. Phosphothreonine occurs at positions 363 and 379. Polar residues-rich tracts occupy residues 369-381, 392-428, and 701-725; these read SMPQSAAVNTTPP, NKATMKTSTVTTAHTSKVQHQASSTSPLSSPNQTSSE, and NLKSHSRTNSGISSASGGSTEPTTP. Phosphoserine is present on residues serine 421 and serine 710. Threonine 724 bears the Phosphothreonine mark. The Rap-GAP domain occupies 1138 to 1382; it reads IGYLDLLPCR…TTLEKEVPVI (245 aa). Serine 1275 carries the phosphoserine modification. The disordered stretch occupies residues 1301 to 1325; it reads DSLNSSQRLSPSSRMKKLPQGRPVP. The segment covering 1302-1313 has biased composition (low complexity); that stretch reads SLNSSQRLSPSS.

Component of the heterodimeric RalGAP1 complex with RALGAPA1 and of the heterodimeric RalGAP2 complex with RALGAPA2. Heterodimerization is required for activity. In terms of tissue distribution, detected in brain, thymus, lung, heart, spleen, liver and testis (at protein level).

Functionally, non-catalytic subunit of the heterodimeric RalGAP1 and RalGAP2 complexes which act as GTPase activators for the Ras-like small GTPases RALA and RALB. The polypeptide is Ral GTPase-activating protein subunit beta (Rattus norvegicus (Rat)).